A 208-amino-acid polypeptide reads, in one-letter code: uncharacterized protein (208 aa).

This is an uncharacterized protein from Bacillus subtilis (strain 168).